Here is a 210-residue protein sequence, read N- to C-terminus: Cytidylate kinase (210 aa).

Position 7–15 (7–15 (GPAASGKGT)) interacts with ATP.

The protein belongs to the cytidylate kinase family. Type 1 subfamily.

It is found in the cytoplasm. It catalyses the reaction CMP + ATP = CDP + ADP. The catalysed reaction is dCMP + ATP = dCDP + ADP. The polypeptide is Cytidylate kinase (Methylobacterium sp. (strain 4-46)).